We begin with the raw amino-acid sequence, 607 residues long: Autophagy-related protein 16-1 (607 aa).

Residues 13–43 are interaction with ATG5; sequence WKRHIAEELRRRDRLQRQAFEEIILQYTKLL. Residues 79–230 adopt a coiled-coil conformation; it reads DSQLQEMAQL…QKELAEAAKE (152 aa). Serine 139 bears the Phosphoserine mark. The segment at 207–230 is WIPI2-binding; sequence AENEKDSRRRQARLQKELAEAAKE. Positions 230–242 are RB1CC1-binding; that stretch reads EPLPVEQDDDIEV. Phosphoserine is present on residues serine 269 and serine 287. The Caspase cleavage signature appears at 296–299; sequence DIMD. WD repeat units follow at residues 320–359, 364–403, 406–445, 447–484, 486–525, 532–573, and 575–607; these read AHDG…CEFK, GSNA…LRHT, GHSG…CIKT, FAGS…VVRE, ELLG…VKQT, KCGS…KVLS, and QHSS…WAQP.

This sequence belongs to the WD repeat ATG16 family. Homodimer. Homooligomer. Heterooligomer with ATG16L2. Interacts with WIPI1. Interacts with WIPI2. Interacts with RB1CC1; the interaction is required for ULK1 complex-dependent autophagy. Interacts with ATG5. Part of the minor complex composed of 4 sets of ATG12-ATG5 and ATG16L1 (400 kDa); this complex interacts with ATG3 leading to disruption of ATG7 interaction and promotion of ATG8-like proteins lipidation. Part of the major complex composed of 8 sets of ATG12-ATG5 and ATG16L1 (800 kDa). Interacts with RAB33B (GTP- and GDP-bound forms); the complex consists of a tetramer where two RAB33B molecules bind independently one molecule of the ATG16L1 homodimer; the interaction promotes ATG12-ATG5-ATG16L1 complex recruitment to phagophores. Interacts (via WD repeats) with TMEM59; the interaction mediates unconventional autophagic activity of TMEM59. Interacts with TLR2. Interacts (via WD repeats) with MEFV. Interacts (via N-terminal) with CLTC. Interacts with NOD1. Interacts with NOD2. Interacts with TUFM. Interacts with TRIM16. Interacts (via WD repeats) with SPATA33. Interacts with Irgm1. In terms of processing, proteolytic cleavage by activated CASP3 leads to degradation and may regulate autophagy upon cellular stress and apoptotic stimuli. Phosphorylation at Ser-139 promotes association with the ATG12-ATG5 conjugate to form the ATG12-ATG5-ATG16L1 complex. In terms of tissue distribution, widely expressed. Expressed in the testis and sperm midpiece (at protein level). Expressed in liver. As to expression, highly expressed in liver. In terms of tissue distribution, expressed in brain.

Its subcellular location is the cytoplasm. It localises to the preautophagosomal structure membrane. The protein localises to the endosome membrane. It is found in the lysosome membrane. Its function is as follows. Plays an essential role in both canonical and non-canonical autophagy: interacts with ATG12-ATG5 to mediate the lipidation to ATG8 family proteins (MAP1LC3A, MAP1LC3B, MAP1LC3C, GABARAPL1, GABARAPL2 and GABARAP). Acts as a molecular hub, coordinating autophagy pathways via distinct domains that support either canonical or non-canonical signaling. During canonical autophagy, interacts with ATG12-ATG5 to mediate the conjugation of phosphatidylethanolamine (PE) to ATG8 proteins, to produce a membrane-bound activated form of ATG8. Thereby, controls the elongation of the nascent autophagosomal membrane. As part of the ATG8 conjugation system with ATG5 and ATG12, required for recruitment of LRRK2 to stressed lysosomes and induction of LRRK2 kinase activity in response to lysosomal stress. Also involved in non-canonical autophagy, a parallel pathway involving conjugation of ATG8 proteins to single membranes at endolysosomal compartments, probably by catalyzing conjugation of phosphatidylserine (PS) to ATG8. Non-canonical autophagy plays a key role in epithelial cells to limit lethal infection by influenza A (IAV) virus. Regulates mitochondrial antiviral signaling (MAVS)-dependent type I interferon (IFN-I) production. Negatively regulates NOD1- and NOD2-driven inflammatory cytokine response. Instead, promotes an autophagy-dependent antibacterial pathway together with NOD1 or NOD2. Plays a role in regulating morphology and function of Paneth cell. The sequence is that of Autophagy-related protein 16-1 from Mus musculus (Mouse).